The chain runs to 290 residues: Ribosomal RNA small subunit methyltransferase A (290 aa).

Residues Asn-27, Leu-29, Gly-54, Glu-75, Asp-100, and Asn-125 each coordinate S-adenosyl-L-methionine.

This sequence belongs to the class I-like SAM-binding methyltransferase superfamily. rRNA adenine N(6)-methyltransferase family. RsmA subfamily.

It is found in the cytoplasm. The catalysed reaction is adenosine(1518)/adenosine(1519) in 16S rRNA + 4 S-adenosyl-L-methionine = N(6)-dimethyladenosine(1518)/N(6)-dimethyladenosine(1519) in 16S rRNA + 4 S-adenosyl-L-homocysteine + 4 H(+). Functionally, specifically dimethylates two adjacent adenosines (A1518 and A1519) in the loop of a conserved hairpin near the 3'-end of 16S rRNA in the 30S particle. May play a critical role in biogenesis of 30S subunits. This is Ribosomal RNA small subunit methyltransferase A from Streptococcus thermophilus (strain ATCC BAA-250 / LMG 18311).